Consider the following 119-residue polypeptide: uncharacterized protein (119 aa).

Helical transmembrane passes span 28-48 (AWTT…HLVF), 55-75 (IEVV…NLAI), and 80-100 (PIGK…GIIV).

This sequence to M.tuberculosis Rv1342c.

It localises to the cell membrane. This is an uncharacterized protein from Mycobacterium leprae (strain TN).